A 548-amino-acid polypeptide reads, in one-letter code: Chaperonin GroEL (548 aa).

ATP is bound by residues 30–33 (TLGP), K51, 87–91 (DGTTT), G415, 479–481 (NAA), and D495.

It belongs to the chaperonin (HSP60) family. As to quaternary structure, forms a cylinder of 14 subunits composed of two heptameric rings stacked back-to-back. Interacts with the co-chaperonin GroES.

Its subcellular location is the cytoplasm. The enzyme catalyses ATP + H2O + a folded polypeptide = ADP + phosphate + an unfolded polypeptide.. In terms of biological role, together with its co-chaperonin GroES, plays an essential role in assisting protein folding. The GroEL-GroES system forms a nano-cage that allows encapsulation of the non-native substrate proteins and provides a physical environment optimized to promote and accelerate protein folding. The sequence is that of Chaperonin GroEL from Proteus mirabilis (strain HI4320).